Consider the following 296-residue polypeptide: Polyadenylate-binding protein 2-A (296 aa).

The disordered stretch occupies residues Met-1–Glu-106. The segment covering Gly-71 to Gly-82 has biased composition (gly residues). Residues Glu-84–Gly-97 show a composition bias toward acidic residues. A coiled-coil region spans residues Asp-107–Ser-141. The segment at Asn-146–Tyr-296 is necessary for homooligomerization. The RRM domain maps to Arg-163–Thr-240.

As to quaternary structure, monomer and homooligomer. Binds RNA as a monomer and oligomerizes when bound to poly(A). In terms of tissue distribution, shows dynamic spatial expression throughout development. First expressed in the animal pole region of the egg and this pattern persists through to the blastula stage. In gastrula and neurula embryos, expressed mainly in ectodermal, neural and epidermal regions. Neural tissue-specific expression pattern persists into tailbud stage when expression is localized to the brain and spinal cord. At early tadpole stage, expression becomes gradually confined to the specific vesicle regions of the developing brain. At stage 39, expressed in the telencephalon and mesencephalon regions of the brain. Also detected in the eye and olfactory pit at the tadpole stage. Expressed during gut endoderm development. At stage 35, expressed exclusively in the anterior portion of the gut endoderm, which includes the prospective liver, stomach and pancreas. As development proceeds, expression becomes restricted to the pancreas, and by stage 46/47 (the seventh day of development) expression is localized exclusively to the pancreas. Expressed in most adult tissues.

The protein localises to the nucleus. It localises to the cytoplasm. Involved in the 3'-end formation of mRNA precursors (pre-mRNA) by the addition of a poly(A) tail of 200-250 nt to the upstream cleavage product. Stimulates poly(A) polymerase (PAPOLA) conferring processivity on the poly(A) tail elongation reaction and also controls the poly(A) tail length. Increases the affinity of poly(A) polymerase for RNA. Binds to poly(A) and to poly(G) with high affinity. May protect the poly(A) tail from degradation. This is Polyadenylate-binding protein 2-A (pabpn1-a) from Xenopus laevis (African clawed frog).